The following is a 425-amino-acid chain: Monoacylglycerol lipase ABHD2 (425 aa).

The Cytoplasmic portion of the chain corresponds to 1-9; that stretch reads MNAMLETPE. Residues 10–30 traverse the membrane as a helical; Signal-anchor for type II membrane protein segment; sequence LPAVFDGVKLAAVAAVLYVIV. Residues 31–425 are Extracellular-facing; the sequence is RCLNLKSPTA…DTEQVEADLE (395 aa). In terms of domain architecture, AB hydrolase-1 spans 128 to 382; sequence MVICPGIANH…HGGHLGFFEG (255 aa). Asn136 carries N-linked (GlcNAc...) asparagine glycosylation. Ser207 (nucleophile) is an active-site residue. Active-site charge relay system residues include Asp345 and His376. A glycan (N-linked (GlcNAc...) asparagine) is linked at Asn410.

This sequence belongs to the AB hydrolase superfamily. AB hydrolase 4 family.

The protein resides in the cell membrane. The enzyme catalyses Hydrolyzes glycerol monoesters of long-chain fatty acids.. It catalyses the reaction an acetyl ester + H2O = an aliphatic alcohol + acetate + H(+). It carries out the reaction a triacylglycerol + H2O = a diacylglycerol + a fatty acid + H(+). The catalysed reaction is 2-(5Z,8Z,11Z,14Z-eicosatetraenoyl)-glycerol + H2O = glycerol + (5Z,8Z,11Z,14Z)-eicosatetraenoate + H(+). The enzyme catalyses a butanoate ester + H2O = an aliphatic alcohol + butanoate + H(+). It catalyses the reaction hexadecanoate ester + H2O = an aliphatic alcohol + hexadecanoate + H(+). With respect to regulation, acylglycerol lipase activity is activated upon binding to progesterone. Progesterone-dependent acylglycerol lipase that catalyzes hydrolysis of endocannabinoid arachidonoylglycerol (AG) from cell membrane. Acts as a progesterone receptor: progesterone-binding activates the acylglycerol lipase activity, mediating degradation of 1-arachidonoylglycerol (1AG) and 2-arachidonoylglycerol (2AG) to glycerol and arachidonic acid (AA). Also displays an ester hydrolase activity against acetyl ester, butanoate ester and hexadecanoate ester. Plays a key role in sperm capacitation in response to progesterone by mediating degradation of 2AG, an inhibitor of the sperm calcium channel CatSper, leading to calcium influx via CatSper and sperm activation. May also play a role in smooth muscle cells migration. This Macaca fascicularis (Crab-eating macaque) protein is Monoacylglycerol lipase ABHD2 (ABHD2).